The following is a 174-amino-acid chain: UPF0340 protein SAHV_2098 (174 aa).

The protein belongs to the UPF0340 family.

This Staphylococcus aureus (strain Mu3 / ATCC 700698) protein is UPF0340 protein SAHV_2098.